The primary structure comprises 1209 residues: ATP-dependent helicase/nuclease subunit A (1209 aa).

The UvrD-like helicase ATP-binding domain occupies 9 to 482; the sequence is SQWTDEQWQA…IDLAKNFRSR (474 aa). Residue 30-37 coordinates ATP; it reads AAAGSGKT. Residues 510-798 enclose the UvrD-like helicase C-terminal domain; sequence AALRFGAQDY…RMMTIHKSKG (289 aa).

Belongs to the helicase family. AddA subfamily. Heterodimer of AddA and AddB/RexB. It depends on Mg(2+) as a cofactor.

The catalysed reaction is Couples ATP hydrolysis with the unwinding of duplex DNA by translocating in the 3'-5' direction.. It carries out the reaction ATP + H2O = ADP + phosphate + H(+). Functionally, the heterodimer acts as both an ATP-dependent DNA helicase and an ATP-dependent, dual-direction single-stranded exonuclease. Recognizes the chi site generating a DNA molecule suitable for the initiation of homologous recombination. The AddA nuclease domain is required for chi fragment generation; this subunit has the helicase and 3' -&gt; 5' nuclease activities. The polypeptide is ATP-dependent helicase/nuclease subunit A (Anoxybacillus flavithermus (strain DSM 21510 / WK1)).